We begin with the raw amino-acid sequence, 274 residues long: MAVIKIKPTSPGQRGAVKISRDHLYKGEAFAGLLEPQFQKAGRNNNGHITTRHKGGGHKHHYRVVDFRRNKDAIPAKVERIEYDPNRTAHIALVCYADGERRYIIAPRNLEVGATIVSGSEAPIRVGNTLPIRNIPVGSTIHCIELKPGAGAQIARSAGTSATLLAREGVYAQVRMRSGEVRKIHIECRATIGEVANEEHSLRQLGKAGVKRWMGIRPTVRGVAMNPIDHPHGGGEGRTGEGRHAVDPWGNLTKGYRTRNNKRTQVMIVSRRKK.

The disordered stretch occupies residues 224–256 (AMNPIDHPHGGGEGRTGEGRHAVDPWGNLTKGY). Over residues 229-246 (DHPHGGGEGRTGEGRHAV) the composition is skewed to basic and acidic residues.

It belongs to the universal ribosomal protein uL2 family. As to quaternary structure, part of the 50S ribosomal subunit. Forms a bridge to the 30S subunit in the 70S ribosome.

Functionally, one of the primary rRNA binding proteins. Required for association of the 30S and 50S subunits to form the 70S ribosome, for tRNA binding and peptide bond formation. It has been suggested to have peptidyltransferase activity; this is somewhat controversial. Makes several contacts with the 16S rRNA in the 70S ribosome. This chain is Large ribosomal subunit protein uL2, found in Acidovorax sp. (strain JS42).